The chain runs to 430 residues: N-lysine methyltransferase SMYD2-B (430 aa).

The region spanning 5–239 (EGLERFDSPG…AGEEVFTSYI (235 aa)) is the SET domain. An S-adenosyl-L-methionine-binding site is contributed by 15–17 (KGR). 8 residues coordinate Zn(2+): cysteine 50, cysteine 53, cysteine 63, cysteine 66, cysteine 72, cysteine 76, histidine 84, and cysteine 88. The MYND-type zinc finger occupies 50 to 88 (CDFCFTRKEGLSKCGKCKQAFYCNVDCQKGDWPMHKLEC). Residues histidine 135, 204-205 (NH), and 256-258 (YFF) each bind S-adenosyl-L-methionine.

It belongs to the class V-like SAM-binding methyltransferase superfamily.

The protein localises to the cytoplasm. It is found in the cytosol. The protein resides in the nucleus. The catalysed reaction is L-lysyl(4)-[histone H3] + 3 S-adenosyl-L-methionine = N(6),N(6),N(6)-trimethyl-L-lysyl(4)-[histone H3] + 3 S-adenosyl-L-homocysteine + 3 H(+). It carries out the reaction L-lysyl-[protein] + S-adenosyl-L-methionine = N(6)-methyl-L-lysyl-[protein] + S-adenosyl-L-homocysteine + H(+). Its function is as follows. Protein-lysine N-methyltransferase that methylates both histones and non-histone proteins, including p53/TP53 and RB1. Specifically trimethylates histone H3 'Lys-4' (H3K4me3) in vivo. The activity requires interaction with HSP90alpha. Shows even higher methyltransferase activity on p53/TP53. Monomethylates 'Lys-370' of p53/TP53, leading to decreased DNA-binding activity and subsequent transcriptional regulation activity of p53/TP53. Monomethylates RB1 at 'Lys-860'. This Xenopus laevis (African clawed frog) protein is N-lysine methyltransferase SMYD2-B (smyd2-b).